The primary structure comprises 144 residues: Flagellar assembly factor FliW (144 aa).

The protein belongs to the FliW family. In terms of assembly, monomer. One copy interacts with the each alpha-helical wing of the CsrA homodimer, yielding a FliW-CsrA(2)-FliW complex. Comparison with a CsrA-mRNA structure (2JPP) suggests CsrA cannot bind both mRNA and FliW at the same time. Interacts with flagellin.

It is found in the cytoplasm. Acts as an anti-CsrA protein, binds CsrA and prevents it from repressing translation of its target genes, one of which is flagellin. Binds to flagellin and participates in the assembly of the flagellum. Functionally, allosterically inhibits CsrA binding to mRNA in a non-competitive fashion by preventing CsrA binding to the 5'-UTR. This chain is Flagellar assembly factor FliW, found in Geobacillus thermodenitrificans (strain NG80-2).